The following is a 134-amino-acid chain: Small ribosomal subunit protein uS11 (134 aa).

Belongs to the universal ribosomal protein uS11 family. In terms of assembly, component of the small ribosomal subunit.

The protein localises to the cytoplasm. In Encephalitozoon cuniculi (strain GB-M1) (Microsporidian parasite), this protein is Small ribosomal subunit protein uS11 (RPS14).